The following is a 953-amino-acid chain: Isoleucine--tRNA ligase (953 aa).

A 'HIGH' region motif is present at residues 61–71; that stretch reads PYANGALHIGH. E564 contacts L-isoleucyl-5'-AMP. The 'KMSKS' region motif lies at 605-609; that stretch reads KMSKS. K608 lines the ATP pocket. C922, C925, C942, and C945 together coordinate Zn(2+).

Belongs to the class-I aminoacyl-tRNA synthetase family. IleS type 1 subfamily. As to quaternary structure, monomer. Zn(2+) serves as cofactor.

It localises to the cytoplasm. It catalyses the reaction tRNA(Ile) + L-isoleucine + ATP = L-isoleucyl-tRNA(Ile) + AMP + diphosphate. Catalyzes the attachment of isoleucine to tRNA(Ile). As IleRS can inadvertently accommodate and process structurally similar amino acids such as valine, to avoid such errors it has two additional distinct tRNA(Ile)-dependent editing activities. One activity is designated as 'pretransfer' editing and involves the hydrolysis of activated Val-AMP. The other activity is designated 'posttransfer' editing and involves deacylation of mischarged Val-tRNA(Ile). The protein is Isoleucine--tRNA ligase of Thermosynechococcus vestitus (strain NIES-2133 / IAM M-273 / BP-1).